A 353-amino-acid chain; its full sequence is Photosystem II protein D1 (353 aa).

Thr2 carries the post-translational modification N-acetylthreonine. Phosphothreonine is present on Thr2. 3 helical membrane-spanning segments follow: residues 29-46 (NIGW…TATS), 118-133 (HFLL…EWEL), and 142-156 (WIAV…AATA). His118 provides a ligand contact to chlorophyll a. A pheophytin a-binding site is contributed by Tyr126. Asp170 and Glu189 together coordinate [CaMn4O5] cluster. The helical transmembrane segment at 197 to 218 (FHMLGVAGVFGGSLFSAMHGSL) threads the bilayer. His198 contacts chlorophyll a. A quinone contacts are provided by residues His215 and 264–265 (SF). Residue His215 coordinates Fe cation. Fe cation is bound at residue His272. The helical transmembrane segment at 274-288 (FLAAWPVVGIWFTAL) threads the bilayer. [CaMn4O5] cluster-binding residues include His332, Glu333, Asp342, and Ala344. Residues 345 to 353 (AVEAPAVNG) constitute a propeptide that is removed on maturation.

The protein belongs to the reaction center PufL/M/PsbA/D family. In terms of assembly, PSII is composed of 1 copy each of membrane proteins PsbA, PsbB, PsbC, PsbD, PsbE, PsbF, PsbH, PsbI, PsbJ, PsbK, PsbL, PsbM, PsbT, PsbX, PsbY, PsbZ, Psb30/Ycf12, at least 3 peripheral proteins of the oxygen-evolving complex and a large number of cofactors. It forms dimeric complexes. The D1/D2 heterodimer binds P680, chlorophylls that are the primary electron donor of PSII, and subsequent electron acceptors. It shares a non-heme iron and each subunit binds pheophytin, quinone, additional chlorophylls, carotenoids and lipids. D1 provides most of the ligands for the Mn4-Ca-O5 cluster of the oxygen-evolving complex (OEC). There is also a Cl(-1) ion associated with D1 and D2, which is required for oxygen evolution. The PSII complex binds additional chlorophylls, carotenoids and specific lipids. serves as cofactor. Tyr-161 forms a radical intermediate that is referred to as redox-active TyrZ, YZ or Y-Z. In terms of processing, C-terminally processed by CTPA; processing is essential to allow assembly of the oxygen-evolving complex and thus photosynthetic growth.

It localises to the plastid. It is found in the chloroplast thylakoid membrane. It carries out the reaction 2 a plastoquinone + 4 hnu + 2 H2O = 2 a plastoquinol + O2. Its function is as follows. Photosystem II (PSII) is a light-driven water:plastoquinone oxidoreductase that uses light energy to abstract electrons from H(2)O, generating O(2) and a proton gradient subsequently used for ATP formation. It consists of a core antenna complex that captures photons, and an electron transfer chain that converts photonic excitation into a charge separation. The D1/D2 (PsbA/PsbD) reaction center heterodimer binds P680, the primary electron donor of PSII as well as several subsequent electron acceptors. The protein is Photosystem II protein D1 of Dumortiera hirsuta (Liverwort).